The primary structure comprises 45 residues: Mu-conotoxin-like Cal 12.1.1d (45 aa).

Cystine bridges form between Cys-3–Cys-16, Cys-11–Cys-28, Cys-18–Cys-33, and Cys-27–Cys-39. The residue at position 17 (Trp-17) is a 6'-bromotryptophan. Glu-21 carries the 4-carboxyglutamate modification. A 4-hydroxyproline modification is found at Pro-23. A 6'-bromotryptophan mark is found at Trp-37 and Trp-38. The residue at position 40 (Pro-40) is a 4-hydroxyproline. A 6'-bromotryptophan modification is found at Trp-44.

As to expression, expressed by the venom duct.

It is found in the secreted. Mu-conotoxins block voltage-gated sodium channels. This toxin reversibly blocks voltage-gated sodium channel in cephalopods, with no alteration in the voltage dependence of sodium conductance or on the kinetics of inactivation. The chain is Mu-conotoxin-like Cal 12.1.1d from Californiconus californicus (California cone).